Here is a 421-residue protein sequence, read N- to C-terminus: Transcription factor rglT (421 aa).

Positions 1-29 (MQYEAYQWGQSHPTSTSGSMLQDTPTAAS) are disordered. Over residues 8–29 (WGQSHPTSTSGSMLQDTPTAAS) the composition is skewed to polar residues. Residues 38-65 (CDECRKRKLKCSGEISGCSRCIKQSLSC) constitute a DNA-binding region (zn(2)-C6 fungal-type). A compositionally biased stretch (basic and acidic residues) spans 346–357 (EARQRRWHESPD). Positions 346-371 (EARQRRWHESPDSHPLPPDQRLNIPS) are disordered.

Its subcellular location is the nucleus. Functionally, transcription factor that is important for oxidative stress resistance and essential for gliotoxin (GT) self-protection through the regulation of a gene encoding a putative gliT homolog, even if E.nidulans does not produce gliotoxin itself. This is Transcription factor rglT from Emericella nidulans (strain FGSC A4 / ATCC 38163 / CBS 112.46 / NRRL 194 / M139) (Aspergillus nidulans).